Reading from the N-terminus, the 542-residue chain is Bifunctional pantoate ligase/cytidylate kinase (542 aa).

A pantoate--beta-alanine ligase region spans residues 1-280; the sequence is MHWLRTVAAL…VGQTRLIDNL (280 aa). Residue 28–35 participates in ATP binding; it reads MGSLHEGH. The Proton donor role is filled by His-35. Residue Gln-59 coordinates (R)-pantoate. Position 59 (Gln-59) interacts with beta-alanine. An ATP-binding site is contributed by 150-153; that stretch reads GQKD. Position 156 (Gln-156) interacts with (R)-pantoate. Residues Val-179 and 187 to 190 each bind ATP; that span reads CSSR. The segment at 281 to 542 is cytidylate kinase; that stretch reads LLSPEQGDPL…ERSGPARLDQ (262 aa). The segment at 287–311 is disordered; that stretch reads GDPLPERVQHAAPPSSGTTSPPRRP.

This sequence in the N-terminal section; belongs to the pantothenate synthetase family. It in the C-terminal section; belongs to the cytidylate kinase family. Type 1 subfamily.

It is found in the cytoplasm. It carries out the reaction (R)-pantoate + beta-alanine + ATP = (R)-pantothenate + AMP + diphosphate + H(+). The enzyme catalyses CMP + ATP = CDP + ADP. It catalyses the reaction dCMP + ATP = dCDP + ADP. The protein operates within cofactor biosynthesis; (R)-pantothenate biosynthesis; (R)-pantothenate from (R)-pantoate and beta-alanine: step 1/1. In terms of biological role, catalyzes the condensation of pantoate with beta-alanine in an ATP-dependent reaction via a pantoyl-adenylate intermediate. Catalyzes the transfer of a phosphate group from ATP to either CMP or dCMP to form CDP or dCDP and ADP, respectively. This Synechococcus sp. (strain JA-2-3B'a(2-13)) (Cyanobacteria bacterium Yellowstone B-Prime) protein is Bifunctional pantoate ligase/cytidylate kinase.